We begin with the raw amino-acid sequence, 359 residues long: Type-1 angiotensin II receptor A (359 aa).

Over 1–25 the chain is Extracellular; it reads MALNSSAEDGIKRIQDDCPKAGRHS. The N-linked (GlcNAc...) asparagine glycan is linked to Asn4. 2 residues coordinate angiotensin II: Gln15 and Asp17. Intrachain disulfides connect Cys18-Cys274 and Cys101-Cys180. Residues 26-55 traverse the membrane as a helical segment; sequence YIFVMIPTLYSIIFVVGIFGNSLVVIVIYF. The Cytoplasmic segment spans residues 56–61; that stretch reads YMKLKT. A helical membrane pass occupies residues 62-89; sequence VASVFLLNLALADLCFLLTLPLWAVYTA. Over 90 to 98 the chain is Extracellular; sequence MEYRWPFGN. Residues 99-125 form a helical membrane-spanning segment; it reads HLCKIASASVSFNLYASVFLLTCLSID. Residues 126 to 141 are Cytoplasmic-facing; it reads RYLAIVHPMKSRLRRT. Residues 142 to 165 form a helical membrane-spanning segment; it reads MLVAKVTCIIIWLMAGLASLPAVI. Over 166–190 the chain is Extracellular; it reads HRNVYFIENTNITVCAFHYESRNST. Arg167 serves as a coordination point for angiotensin II. N-linked (GlcNAc...) asparagine glycosylation occurs at Asn176. The angiotensin II site is built by Phe182, His183, and Tyr184. Asn188 is a glycosylation site (N-linked (GlcNAc...) asparagine). The helical transmembrane segment at 191–216 threads the bilayer; it reads LPIGLGLTKNILGFLFPFLIILTSYT. Lys199 contributes to the angiotensin II binding site. At 217–239 the chain is on the cytoplasmic side; it reads LIWKALKKAYEIQKNKPRNDDIF. Residues 240–268 traverse the membrane as a helical segment; that stretch reads RIIMAIVLFFFFSWVPHQIFTFLDVLIQL. The Extracellular segment spans residues 269 to 278; that stretch reads GVIHDCKISD. The helical transmembrane segment at 279–304 threads the bilayer; the sequence is IVDTAMPITICIAYFNNCLNPLFYGF. The Cytoplasmic segment spans residues 305-359; that stretch reads LGKKFKKYFLQLLKYIPPKAKSHSSLSTKMSTLSYRPSDNMSSSAKKPASCFEVE. Residues 337 to 349 are compositionally biased toward polar residues; the sequence is LSYRPSDNMSSSA. Residues 337–359 are disordered; it reads LSYRPSDNMSSSAKKPASCFEVE. A lipid anchor (S-palmitoyl cysteine) is attached at Cys355.

The protein belongs to the G-protein coupled receptor 1 family. Interacts with MAS1. Interacts with ARRB1. Interacts with FLNA (via filamin repeat 21); increases PKA-mediated phosphorylation of FLNA. In terms of processing, C-terminal Ser or Thr residues may be phosphorylated. As to expression, is expressed in the liver, kidney, aorta, lung, uterus, ovary, spleen, heart, adrenal gland, and vascular smooth muscle cell.

Its subcellular location is the cell membrane. Functionally, receptor for angiotensin II, a vasoconstricting peptide, which acts as a key regulator of blood pressure and sodium retention by the kidney. The activated receptor in turn couples to G-alpha proteins G(q) (GNAQ, GNA11, GNA14 or GNA15) and thus activates phospholipase C and increases the cytosolic Ca(2+) concentrations, which in turn triggers cellular responses such as stimulation of protein kinase C. The polypeptide is Type-1 angiotensin II receptor A (Agtr1) (Rattus norvegicus (Rat)).